The primary structure comprises 289 residues: Movement protein (289 aa).

This sequence belongs to the ilarvirus movement protein family.

Its subcellular location is the host cell junction. It is found in the host plasmodesma. Its function is as follows. Transports viral genome to neighboring plant cells directly through plasmosdesmata, without any budding. The movement protein allows efficient cell to cell propagation, by bypassing the host cell wall barrier. Acts by forming a tubular structure at the host plasmodesmata, enlarging it enough to allow free passage of virion capsids. In Tobacco streak virus (strain WC) (TSV), this protein is Movement protein.